The sequence spans 861 residues: Bifunctional uridylyltransferase/uridylyl-removing enzyme (861 aa).

A uridylyltransferase region spans residues 1–321 (MKNDNRIIKN…VYHQKQKIIR (321 aa)). Residues 322–678 (LDDEFQLSNR…IMPHHSQGGT (357 aa)) form a uridylyl-removing region. The region spanning 440-562 (VDQHTLFVIR…LPHAKYLDYL (123 aa)) is the HD domain. ACT domains lie at 679 to 760 (EVFI…AVSR) and 788 to 861 (QLFL…KSKY).

Belongs to the GlnD family. Mg(2+) serves as cofactor.

It carries out the reaction [protein-PII]-L-tyrosine + UTP = [protein-PII]-uridylyl-L-tyrosine + diphosphate. The enzyme catalyses [protein-PII]-uridylyl-L-tyrosine + H2O = [protein-PII]-L-tyrosine + UMP + H(+). With respect to regulation, uridylyltransferase (UTase) activity is inhibited by glutamine, while glutamine activates uridylyl-removing (UR) activity. Its function is as follows. Modifies, by uridylylation and deuridylylation, the PII regulatory proteins (GlnB and homologs), in response to the nitrogen status of the cell that GlnD senses through the glutamine level. Under low glutamine levels, catalyzes the conversion of the PII proteins and UTP to PII-UMP and PPi, while under higher glutamine levels, GlnD hydrolyzes PII-UMP to PII and UMP (deuridylylation). Thus, controls uridylylation state and activity of the PII proteins, and plays an important role in the regulation of nitrogen assimilation and metabolism. In Legionella pneumophila (strain Lens), this protein is Bifunctional uridylyltransferase/uridylyl-removing enzyme.